Here is a 356-residue protein sequence, read N- to C-terminus: MSQYWSAVVHGLTPYVPGEQPKLANLVKLNTNEHPYGPSPRALAAIRAEASDALRLYPDPHADRLKAAIATRFGVEPREVFVGNGSDEVLAHAFMALLKHERPLRFPDISYSFYPVYCGLYGIAFETVPLDDDFAIRPDDYLPHGSVAAGGIIFPNPNAPTGRLMPLSDIERIVAGNPQCVVVIDEAYVDFGGESAIPLVRHHPNLLVVQTLSKSRSLAGLRVGFAVGNPDLIEALDRVKDSFNSYPLDRLAIAGGVAAIEDEEHFQRTRMAVIATRERLSADLASLGFDVLPSAANFVFTRHPHRDAGELAAQLRRRAIIVRHFRQPRIEQFLRITVGTDEQCAALVEALRDILR.

An N6-(pyridoxal phosphate)lysine modification is found at lysine 214.

Belongs to the class-II pyridoxal-phosphate-dependent aminotransferase family. Histidinol-phosphate aminotransferase subfamily. In terms of assembly, homodimer. It depends on pyridoxal 5'-phosphate as a cofactor.

The catalysed reaction is L-histidinol phosphate + 2-oxoglutarate = 3-(imidazol-4-yl)-2-oxopropyl phosphate + L-glutamate. Its pathway is amino-acid biosynthesis; L-histidine biosynthesis; L-histidine from 5-phospho-alpha-D-ribose 1-diphosphate: step 7/9. This is Histidinol-phosphate aminotransferase from Aromatoleum aromaticum (strain DSM 19018 / LMG 30748 / EbN1) (Azoarcus sp. (strain EbN1)).